Reading from the N-terminus, the 374-residue chain is 5-hydroxytryptamine receptor 1D (374 aa).

Asn5, Asn17, and Asn21 each carry an N-linked (GlcNAc...) asparagine glycan. 3 consecutive transmembrane segments (helical) span residues 36–61, 73–94, and 107–131; these read ISLV…TTIL, LIGS…ISIA, and LCDI…VIAL. A disulfide bridge connects residues Cys108 and Cys185. Serotonin-binding residues include Asp115 and Cys119. The DRY motif; important for ligand-induced conformation changes motif lies at 132–134; sequence DRY. The next 4 membrane-spanning stretches (helical) occupy residues 152–173, 192–215, 298–323, and 333–356; these read AAAM…PLFW, ISYT…ILYG, KTLG…VLPI, and ALFD…YTVF. Ser318 provides a ligand contact to serotonin. The short motif at 349–353 is the NPxxY motif; important for ligand-induced conformation changes and signaling element; the sequence is NPVIY.

This sequence belongs to the G-protein coupled receptor 1 family. In terms of assembly, homodimer. Heterodimer with HTR1B. Detected in dorsal raphe.

It localises to the cell membrane. In terms of biological role, G-protein coupled receptor for 5-hydroxytryptamine (serotonin). Also functions as a receptor for ergot alkaloid derivatives, various anxiolytic and antidepressant drugs and other psychoactive substances. Ligand binding causes a conformation change that triggers signaling via guanine nucleotide-binding proteins (G proteins) and modulates the activity of downstream effectors, such as adenylate cyclase. HTR1D is coupled to G(i)/G(o) G alpha proteins and mediates inhibitory neurotransmission by inhibiting adenylate cyclase activity. Regulates the release of 5-hydroxytryptamine in the brain, and thereby affects neural activity. May also play a role in regulating the release of other neurotransmitters. May play a role in vasoconstriction. The polypeptide is 5-hydroxytryptamine receptor 1D (Htr1d) (Rattus norvegicus (Rat)).